Reading from the N-terminus, the 1003-residue chain is Cytosolic carboxypeptidase 3 (1003 aa).

The segment at 1-23 is disordered; sequence MSEDSEKEDYSDRTISDEDESDE. In terms of domain architecture, Peptidase M14 spans 299–570; it reads YPYTYTNLQE…HFCDSLLDYC (272 aa). The Zn(2+) site is built by His364, Glu367, and His460. The active-site Proton donor/acceptor is the Glu534. 2 disordered regions span residues 642–662 and 911–1003; these read KQLK…NIRE and KSSE…QRDT. A compositionally biased stretch (basic and acidic residues) spans 649 to 662; it reads ERNSTIERHQNIRE. Positions 922–934 are enriched in basic residues; it reads PKKRRKYSRVKAT. Over residues 963 to 976 the composition is skewed to polar residues; the sequence is AEGSSQQGTMQTAP.

It belongs to the peptidase M14 family. Zn(2+) is required as a cofactor.

The protein resides in the cytoplasm. It is found in the cytosol. It carries out the reaction (L-glutamyl)(n+1)-gamma-L-glutamyl-L-glutamyl-[protein] + H2O = (L-glutamyl)(n)-gamma-L-glutamyl-L-glutamyl-[protein] + L-glutamate. In terms of biological role, metallocarboxypeptidase that mediates deglutamylation of tubulin and non-tubulin target proteins. Catalyzes the removal of polyglutamate side chains present on the gamma-carboxyl group of glutamate residues within the C-terminal tail of tubulin protein. Specifically cleaves tubulin long-side-chains, while it is not able to remove the branching point glutamate. Also catalyzes the removal of polyglutamate residues from the carboxy-terminus of non-tubulin proteins such as MYLK. May catalyze the hydrolysis of aspartate from the carboxy-terminus of target proteins. Does not show detyrosinase or deglycylase activities from the carboxy-terminus of target proteins. The chain is Cytosolic carboxypeptidase 3 (AGBL3) from Bos taurus (Bovine).